The following is a 670-amino-acid chain: UvrABC system protein B (670 aa).

Residues 26 to 414 (EGLEDGLAHQ…GGDVIDQVVR (389 aa)) enclose the Helicase ATP-binding domain. 39–46 (GVTGSGKT) serves as a coordination point for ATP. A Beta-hairpin motif is present at residues 92-115 (YYDYYQPEAYVPSSDTFIEKDASV). One can recognise a Helicase C-terminal domain in the interval 431–597 (QVDDLLSEIR…GINKKISDIL (167 aa)). Residues 630 to 665 (ELKIRELESKMLTHAQNLEFEEAAALRDEVQVLRAQ) form the UVR domain.

It belongs to the UvrB family. As to quaternary structure, forms a heterotetramer with UvrA during the search for lesions. Interacts with UvrC in an incision complex.

The protein localises to the cytoplasm. Its function is as follows. The UvrABC repair system catalyzes the recognition and processing of DNA lesions. A damage recognition complex composed of 2 UvrA and 2 UvrB subunits scans DNA for abnormalities. Upon binding of the UvrA(2)B(2) complex to a putative damaged site, the DNA wraps around one UvrB monomer. DNA wrap is dependent on ATP binding by UvrB and probably causes local melting of the DNA helix, facilitating insertion of UvrB beta-hairpin between the DNA strands. Then UvrB probes one DNA strand for the presence of a lesion. If a lesion is found the UvrA subunits dissociate and the UvrB-DNA preincision complex is formed. This complex is subsequently bound by UvrC and the second UvrB is released. If no lesion is found, the DNA wraps around the other UvrB subunit that will check the other stand for damage. The sequence is that of UvrABC system protein B from Pectobacterium atrosepticum (strain SCRI 1043 / ATCC BAA-672) (Erwinia carotovora subsp. atroseptica).